We begin with the raw amino-acid sequence, 404 residues long: Methyltransferase-like protein 22 (404 aa).

Disordered stretches follow at residues 60-102 (TDSG…SLQA) and 115-145 (QLDEDGDLDVVRRPRAASDSNPAGPLRDKVH). The span at 68 to 78 (SHRDVHTKEPP) shows a compositional bias: basic and acidic residues. Residues 79-88 (SAETGSTGSP) are compositionally biased toward low complexity. Ser-132 carries the phosphoserine modification.

This sequence belongs to the methyltransferase superfamily. METTL22 family. Interacts with members of the heat shock protein 90 and 70 families; these proteins probably are methylation substrates.

Its subcellular location is the nucleus. It carries out the reaction L-lysyl-[protein] + 3 S-adenosyl-L-methionine = N(6),N(6),N(6)-trimethyl-L-lysyl-[protein] + 3 S-adenosyl-L-homocysteine + 3 H(+). Protein N-lysine methyltransferase. Trimethylates KIN at Lys-135 (in vitro). The chain is Methyltransferase-like protein 22 (METTL22) from Homo sapiens (Human).